The chain runs to 162 residues: Phenazine biosynthesis protein PhzA2 (162 aa).

It belongs to the PhzA/PhzB family.

It functions in the pathway antibiotic biosynthesis; phenazine biosynthesis. Functionally, involved in the biosynthesis of the antibiotic phenazine, a nitrogen-containing heterocyclic molecule having important roles in virulence, competition and biological control. PhzA2 (operon phzA2B2C2E2F2G2) has a role in the biosynthesis of the phenazine during both planktonic growth and biofilm development, and in host infection during biofilm development. This Pseudomonas aeruginosa (strain ATCC 15692 / DSM 22644 / CIP 104116 / JCM 14847 / LMG 12228 / 1C / PRS 101 / PAO1) protein is Phenazine biosynthesis protein PhzA2.